A 186-amino-acid polypeptide reads, in one-letter code: TATA box-binding protein-like 1 (186 aa).

The protein belongs to the TBP family.

It localises to the cytoplasm. The protein resides in the nucleus. Part of a specialized transcription system that mediates the transcription of most ribosomal proteins through the 5'-TCT-3' motif which is a core promoter element at these genes. Seems to also mediate the transcription of NF1. Does not bind the TATA box. Members of the TBP family are differentially required to regulate transcription and development during early embryogenesis. In Danio rerio (Zebrafish), this protein is TATA box-binding protein-like 1.